The sequence spans 117 residues: Large ribosomal subunit protein bL19 (117 aa).

This sequence belongs to the bacterial ribosomal protein bL19 family.

In terms of biological role, this protein is located at the 30S-50S ribosomal subunit interface and may play a role in the structure and function of the aminoacyl-tRNA binding site. The polypeptide is Large ribosomal subunit protein bL19 (Mycoplasmopsis pulmonis (strain UAB CTIP) (Mycoplasma pulmonis)).